Reading from the N-terminus, the 344-residue chain is S-adenosylmethionine:tRNA ribosyltransferase-isomerase (344 aa).

This sequence belongs to the QueA family. As to quaternary structure, monomer.

The protein localises to the cytoplasm. It catalyses the reaction 7-aminomethyl-7-carbaguanosine(34) in tRNA + S-adenosyl-L-methionine = epoxyqueuosine(34) in tRNA + adenine + L-methionine + 2 H(+). It participates in tRNA modification; tRNA-queuosine biosynthesis. In terms of biological role, transfers and isomerizes the ribose moiety from AdoMet to the 7-aminomethyl group of 7-deazaguanine (preQ1-tRNA) to give epoxyqueuosine (oQ-tRNA). This chain is S-adenosylmethionine:tRNA ribosyltransferase-isomerase, found in Heliobacterium modesticaldum (strain ATCC 51547 / Ice1).